We begin with the raw amino-acid sequence, 307 residues long: Acetaldehyde dehydrogenase (307 aa).

12-15 (SGNI) contacts NAD(+). C130 acts as the Acyl-thioester intermediate in catalysis. NAD(+) is bound by residues 161-169 (SVGPGTRQN) and N272.

This sequence belongs to the acetaldehyde dehydrogenase family.

The catalysed reaction is acetaldehyde + NAD(+) + CoA = acetyl-CoA + NADH + H(+). The sequence is that of Acetaldehyde dehydrogenase from Shewanella pealeana (strain ATCC 700345 / ANG-SQ1).